The primary structure comprises 282 residues: Chromatin modification-related protein YNG2 (282 aa).

Residues 35–86 (LIEEKKKYEQKESQIHKFIRQQGSIPKHPQEDGLDKEIKESLLKCQSLQREK) adopt a coiled-coil conformation. Positions 123 to 217 (DGDMDSAAEA…KGQNGSPENE (95 aa)) are disordered. Over residues 129–143 (AAEASRESSVVSNSS) the composition is skewed to low complexity. Residue Ser-183 is modified to Phosphoserine. Residue Thr-185 is modified to Phosphothreonine. Ser-188 bears the Phosphoserine mark. Positions 191–203 (IEKKIARTKEFKN) are enriched in basic and acidic residues. A compositionally biased stretch (polar residues) spans 204-214 (SRNGKGQNGSP). The PHD-type zinc-finger motif lies at 222–271 (TLYCFCQRVSFGEMVACDGPNCKYEWFHYDCVNLKEPPKGTWYCPECKIE). Zn(2+)-binding residues include Cys-225, Cys-227, Cys-238, Cys-243, His-249, Cys-252, Cys-265, and Cys-268.

It belongs to the ING family. Interacts with H3K4me3 and to a lesser extent with H3K4me2. Component of the NuA4 histone acetyltransferase complex composed of at least ACT1, ARP4, YAF9, VID21, SWC4, EAF3, EAF5, EAF6, EAF7, EPL1, ESA1, TRA1 and YNG2.

It localises to the nucleus. Its function is as follows. Component of the NuA4 histone acetyltransferase complex which is involved in transcriptional activation of selected genes principally by acetylation of nucleosomal histone H4 and H2A. The NuA4 complex is also involved in DNA repair. Involved in cell cycle progression and meiosis. This is Chromatin modification-related protein YNG2 (YNG2) from Saccharomyces cerevisiae (strain ATCC 204508 / S288c) (Baker's yeast).